The chain runs to 434 residues: Beta-enolase (434 aa).

Position 2 is an N-acetylserine (Ser-2). The substrate site is built by His-158 and Glu-167. Glu-210 serves as the catalytic Proton donor. Positions 245, 293, and 318 each coordinate Mg(2+). Residues Glu-293 and Asp-318 each contribute to the substrate site. The Proton acceptor role is filled by Lys-343. Residues 370–373 (SHRS) and Lys-394 each bind substrate.

It belongs to the enolase family. Homodimer. Interacts with PNKD. Mg(2+) serves as cofactor.

The protein resides in the cytoplasm. It carries out the reaction (2R)-2-phosphoglycerate = phosphoenolpyruvate + H2O. Its pathway is carbohydrate degradation; glycolysis; pyruvate from D-glyceraldehyde 3-phosphate: step 4/5. Glycolytic enzyme that catalyzes the conversion of 2-phosphoglycerate to phosphoenolpyruvate. In Gallus gallus (Chicken), this protein is Beta-enolase (ENO3).